The primary structure comprises 277 residues: Caspase-3 (277 aa).

Residue Met1 is modified to N-acetylmethionine. 2 propeptides span residues 1-9 (MENNKTSVD) and 10-28 (SKSINNFEVKTIHGSKSVD). Lys11 is subject to N6-acetyllysine. A Phosphoserine modification is found at Ser26. Catalysis depends on residues His121 and Cys163. An S-nitrosocysteine; in inhibited form modification is found at Cys163.

It belongs to the peptidase C14A family. Heterotetramer that consists of two anti-parallel arranged heterodimers, each one formed by a 17 kDa (p17) and a 12 kDa (p12) subunit. Interacts with BIRC6/bruce. In terms of processing, cleavage by granzyme B, caspase-6, caspase-8 and caspase-10 generates the two active subunits. Additional processing of the propeptides is likely due to the autocatalytic activity of the activated protease. Active heterodimers between the small subunit of caspase-7 protease and the large subunit of caspase-3 also occur and vice versa. Post-translationally, S-nitrosylated on its catalytic site cysteine in unstimulated cell lines and denitrosylated upon activation of the Fas apoptotic pathway, associated with an increase in intracellular caspase activity. Fas therefore activates caspase-3 not only by inducing the cleavage of the caspase zymogen to its active subunits, but also by stimulating the denitrosylation of its active site thiol. Ubiquitinated by BIRC6; this activity is inhibited by DIABLO/SMAC. In terms of tissue distribution, highest expression in spleen, lung, liver, kidney and heart. Lower expression in brain, skeletal muscle and testis.

The protein localises to the cytoplasm. It catalyses the reaction Strict requirement for an Asp residue at positions P1 and P4. It has a preferred cleavage sequence of Asp-Xaa-Xaa-Asp-|- with a hydrophobic amino-acid residue at P2 and a hydrophilic amino-acid residue at P3, although Val or Ala are also accepted at this position.. With respect to regulation, inhibited by BIRC6; following inhibition of BIRC6-caspase binding by DIABLO/SMAC, BIRC6 is subjected to caspase cleavage, leading to an increase in active caspases. Its function is as follows. Thiol protease that acts as a major effector caspase involved in the execution phase of apoptosis. Following cleavage and activation by initiator caspases (CASP8, CASP9 and/or CASP10), mediates execution of apoptosis by catalyzing cleavage of many proteins. At the onset of apoptosis, it proteolytically cleaves poly(ADP-ribose) polymerase PARP1 at a '216-Asp-|-Gly-217' bond. Cleaves and activates sterol regulatory element binding proteins (SREBPs) between the basic helix-loop-helix leucine zipper domain and the membrane attachment domain. Cleaves and activates caspase-6, -7 and -9 (CASP6, CASP7 and CASP9, respectively). Cleaves and inactivates interleukin-18 (IL18). Triggers cell adhesion in sympathetic neurons through RET cleavage. Cleaves IL-1 beta between an Asp and an Ala, releasing the mature cytokine which is involved in a variety of inflammatory processes. Cleaves and inhibits serine/threonine-protein kinase AKT1 in response to oxidative stress. Acts as an inhibitor of type I interferon production during virus-induced apoptosis by mediating cleavage of antiviral proteins CGAS, IRF3 and MAVS, thereby preventing cytokine overproduction. Also involved in pyroptosis by mediating cleavage and activation of gasdermin-E (GSDME). Cleaves XRCC4 and phospholipid scramblase proteins XKR4, XKR8 and XKR9, leading to promote phosphatidylserine exposure on apoptotic cell surface. Cleaves BIRC6 following inhibition of BIRC6-caspase binding by DIABLO/SMAC. The sequence is that of Caspase-3 (Casp3) from Mus musculus (Mouse).